The chain runs to 404 residues: Serine/threonine transporter SstT (404 aa).

Helical transmembrane passes span 17 to 37 (IGIG…LTGF), 39 to 59 (ILGK…VFAL), 75 to 95 (MTLI…VAVL), 138 to 158 (ALAT…GLAL), 179 to 199 (IVVW…FTTI), 212 to 232 (FLIL…NPLI), 287 to 307 (IPLG…VLTL), and 313 to 333 (FGIP…AVSA).

It belongs to the dicarboxylate/amino acid:cation symporter (DAACS) (TC 2.A.23) family.

The protein resides in the cell membrane. The enzyme catalyses L-serine(in) + Na(+)(in) = L-serine(out) + Na(+)(out). It catalyses the reaction L-threonine(in) + Na(+)(in) = L-threonine(out) + Na(+)(out). Its function is as follows. Involved in the import of serine and threonine into the cell, with the concomitant import of sodium (symport system). In Streptococcus pyogenes serotype M1, this protein is Serine/threonine transporter SstT.